The chain runs to 560 residues: Arginine--tRNA ligase (560 aa).

The 'HIGH' region signature appears at F164 to D174.

This sequence belongs to the class-I aminoacyl-tRNA synthetase family. Monomer.

It is found in the cytoplasm. It carries out the reaction tRNA(Arg) + L-arginine + ATP = L-arginyl-tRNA(Arg) + AMP + diphosphate. The chain is Arginine--tRNA ligase from Bordetella pertussis (strain Tohama I / ATCC BAA-589 / NCTC 13251).